The primary structure comprises 113 residues: UPF0342 protein MGAS2096_Spy0691 (113 aa).

It belongs to the UPF0342 family.

This is UPF0342 protein MGAS2096_Spy0691 from Streptococcus pyogenes serotype M12 (strain MGAS2096).